A 322-amino-acid chain; its full sequence is Short-chain dehydrogenase TIC 32, chloroplastic (322 aa).

Residues 36–42 (GASSGIG), 88–89 (DL), Asn115, and Thr136 each bind NADP(+). Ser170 is a binding site for substrate. The active-site Proton acceptor is Tyr192. The interaction with calmodulin stretch occupies residues 298-314 (DTELAKKVWDFSTKLTD).

It belongs to the short-chain dehydrogenases/reductases (SDR) family. As to quaternary structure, part of the Tic complex. Interacts with TIC110. As to expression, expressed in leaves and roots.

The protein resides in the plastid. It localises to the chloroplast inner membrane. Involved in protein precursor import into chloroplasts. Part of the redox regulon consisting of TIC32, TIC 55 and TIC62. The sequence is that of Short-chain dehydrogenase TIC 32, chloroplastic from Arabidopsis thaliana (Mouse-ear cress).